The primary structure comprises 110 residues: Spermatid nuclear transition protein 3 (110 aa).

Residues 80–110 (RSCAREKLNQSRKRYQNMRQSQRRGQNQKRR) form a disordered region.

It localises to the nucleus. Its subcellular location is the chromosome. Its function is as follows. Involved in nuclear basic protein transition: histones are replaced by spermatid specific proteins which are themselves replaced by protamines in late spermatids. This chain is Spermatid nuclear transition protein 3, found in Ovis aries (Sheep).